Reading from the N-terminus, the 474-residue chain is Homeobox protein PKNOX2 (474 aa).

Residues 1-42 are disordered; sequence MMQHASPAPALTMMATQNVPPPPYQDSPQMTATAQPPSKAQA. Over residues 26–38 the composition is skewed to polar residues; the sequence is DSPQMTATAQPPS. One can recognise an MEIS N-terminal domain in the interval 96–179; sequence GSECITSASF…MHSDNLLRND (84 aa). A DNA-binding region (homeobox) is located at residues 291–350; the sequence is KRGVLPKHATNIMRSWLFQHLMHPYPTEDEKRQIAAQTNLTLLQVNNWFINARRRILQPM. 3 disordered regions span residues 351 to 371, 385 to 405, and 423 to 474; these read LDAS…QHRP, LQQQ…LDNL, and AAHD…DSLE. Residues 361-371 are compositionally biased toward basic residues; the sequence is KAKKIKSQHRP. Residues 429-456 show a composition bias toward acidic residues; the sequence is LDGTEEEDEDDMEEEEEEEEELEEEADE.

It belongs to the TALE/MEIS homeobox family.

Its subcellular location is the nucleus. This Mus musculus (Mouse) protein is Homeobox protein PKNOX2 (Pknox2).